The following is a 177-amino-acid chain: Small ribosomal subunit protein uS5 (177 aa).

The region spanning 19 to 82 (WQERVVQIRR…ADGKKQLVEV (64 aa)) is the S5 DRBM domain.

The protein belongs to the universal ribosomal protein uS5 family. As to quaternary structure, part of the 30S ribosomal subunit. Contacts proteins S4 and S8.

With S4 and S12 plays an important role in translational accuracy. Its function is as follows. Located at the back of the 30S subunit body where it stabilizes the conformation of the head with respect to the body. This Acaryochloris marina (strain MBIC 11017) protein is Small ribosomal subunit protein uS5.